Here is a 435-residue protein sequence, read N- to C-terminus: MIGGLFIYNHKGEVLISRVYRDDIGRNAVDAFRVNVIHARQQVRSPVTNIARTSFFHVKRSNIWLAAVTKQNVNAAMVFEFLYKMCDVMAAYFGKISEENIKNNFVLIYELLDEILDFGYPQNSETGALKTFITQQGIKSQHQTKEEQSQITSQVTGQIGWRREGIKYRRNELFLDVLESVNLLMSPQGQVLSAHVSGRVVMKSYLSGMPECKFGMNDKIVIEKQGKGTADETSKSGKQSIAIDDCTFHQCVRLSKFDSERSISFIPPDGEFELMRYRTTKDIILPFRVIPLVREVGRTKLEVKVVIKSNFKPSLLAQKIEVRIPTPLNTSGVQVICMKGKAKYKASENAIVWKIKRMAGMKESQISAEIELLPTNDKKKWARPPISMNFEVPFAPSGLKVRYLKVFEPKLNYSDHDVIKWVRYIGRSGIYETRC.

Serine 45 is modified (phosphoserine). Phosphothreonine is present on threonine 156. In terms of domain architecture, MHD spans 170 to 434 (RNELFLDVLE…IGRSGIYETR (265 aa)). Positions 341, 345, and 354 each coordinate a 1,2-diacyl-sn-glycero-3-phospho-(1D-myo-inositol-3,4,5-trisphosphate).

Belongs to the adaptor complexes medium subunit family. As to quaternary structure, adaptor protein complex 2 (AP-2) is a heterotetramer composed of two large adaptins (alpha-type subunit AP2A1 or AP2A2 and beta-type subunit AP2B1), a medium adaptin (mu-type subunit AP2M1) and a small adaptin (sigma-type subunit AP2S1). Interacts with ATP6V1H and MEGF10. Interacts with EGFR and TTGN1. Interacts with F2R. Interacts with PIP5K1C; tyrosine phosphorylation of PIP5K1C weakens the interaction. Interacts with KIAA0319; required for clathrin-mediated endocytosis of KIAA0319. Interacts with DVL2 (via DEP domain). Interacts with KCNQ1; mediates estrogen-induced internalization via clathrin-coated vesicles. Interacts with P2RX4 (via internalization motif). Together with AP2A1 or AP2A2 and AP2B1, it interacts with ADAM10; this interaction facilitates ADAM10 endocytosis from the plasma membrane during long-term potentiation in hippocampal neurons. Probably interacts with ACE2 (via endocytic sorting signal motif); the interaction is inhibited by ACE2 phosphorylation. Interacts with RALBP1; the interaction is direct. Interacts with TMEM106B (via N-terminus). Phosphorylation at Thr-156 increases the affinity of the AP-2 complex for cargo membrane proteins during the initial stages of endocytosis.

It localises to the cell membrane. The protein localises to the membrane. It is found in the coated pit. In terms of biological role, component of the adaptor protein complex 2 (AP-2). Adaptor protein complexes function in protein transport via transport vesicles in different membrane traffic pathways. Adaptor protein complexes are vesicle coat components and appear to be involved in cargo selection and vesicle formation. AP-2 is involved in clathrin-dependent endocytosis in which cargo proteins are incorporated into vesicles surrounded by clathrin (clathrin-coated vesicles, CCVs) which are destined for fusion with the early endosome. The clathrin lattice serves as a mechanical scaffold but is itself unable to bind directly to membrane components. Clathrin-associated adaptor protein (AP) complexes which can bind directly to both the clathrin lattice and to the lipid and protein components of membranes are considered to be the major clathrin adaptors contributing the CCV formation. AP-2 also serves as a cargo receptor to selectively sort the membrane proteins involved in receptor-mediated endocytosis. AP-2 seems to play a role in the recycling of synaptic vesicle membranes from the presynaptic surface. AP-2 recognizes Y-X-X-[FILMV] (Y-X-X-Phi) and [ED]-X-X-X-L-[LI] endocytosis signal motifs within the cytosolic tails of transmembrane cargo molecules. AP-2 may also play a role in maintaining normal post-endocytic trafficking through the ARF6-regulated, non-clathrin pathway. During long-term potentiation in hippocampal neurons, AP-2 is responsible for the endocytosis of ADAM10. The AP-2 mu subunit binds to transmembrane cargo proteins; it recognizes the Y-X-X-Phi motifs. The surface region interacting with to the Y-X-X-Phi motif is inaccessible in cytosolic AP-2, but becomes accessible through a conformational change following phosphorylation of AP-2 mu subunit at Thr-156 in membrane-associated AP-2. The membrane-specific phosphorylation event appears to involve assembled clathrin which activates the AP-2 mu kinase AAK1. Plays a role in endocytosis of frizzled family members upon Wnt signaling. The polypeptide is AP-2 complex subunit mu (AP2M1) (Bos taurus (Bovine)).